Reading from the N-terminus, the 122-residue chain is Large ribosomal subunit protein uL18 (122 aa).

The span at 1 to 19 shows a compositional bias: basic residues; that stretch reads MTKLSRKLQTQKRHRRLRR. The disordered stretch occupies residues 1–21; that stretch reads MTKLSRKLQTQKRHRRLRRSV.

The protein belongs to the universal ribosomal protein uL18 family. As to quaternary structure, part of the 50S ribosomal subunit; part of the 5S rRNA/L5/L18/L25 subcomplex. Contacts the 5S and 23S rRNAs.

Functionally, this is one of the proteins that bind and probably mediate the attachment of the 5S RNA into the large ribosomal subunit, where it forms part of the central protuberance. The chain is Large ribosomal subunit protein uL18 from Prochlorococcus marinus (strain MIT 9312).